Consider the following 497-residue polypeptide: uncharacterized protein (497 aa).

Transmembrane regions (helical) follow at residues 91 to 111, 119 to 139, 149 to 169, 179 to 199, 215 to 235, 283 to 303, 319 to 339, 347 to 367, 374 to 394, 406 to 426, and 439 to 459; these read WVGT…STLL, VTSA…LVHS, LLGI…AQWY, AFLV…SYGL, ILFI…FIHI, MYLY…LSNF, LLMN…FGLI, MDIA…IAFA, LAGY…LSCI, FMSA…PQTF, and VSFV…YAVN.

The protein belongs to the major facilitator superfamily. Allantoate permease family.

The protein localises to the golgi apparatus. The protein resides in the membrane. This is an uncharacterized protein from Schizosaccharomyces pombe (strain 972 / ATCC 24843) (Fission yeast).